The primary structure comprises 197 residues: dTTP/UTP pyrophosphatase (197 aa).

Aspartate 70 serves as the catalytic Proton acceptor.

This sequence belongs to the Maf family. YhdE subfamily. A divalent metal cation is required as a cofactor.

It localises to the cytoplasm. The catalysed reaction is dTTP + H2O = dTMP + diphosphate + H(+). It catalyses the reaction UTP + H2O = UMP + diphosphate + H(+). Its function is as follows. Nucleoside triphosphate pyrophosphatase that hydrolyzes dTTP and UTP. May have a dual role in cell division arrest and in preventing the incorporation of modified nucleotides into cellular nucleic acids. The protein is dTTP/UTP pyrophosphatase of Pectobacterium atrosepticum (strain SCRI 1043 / ATCC BAA-672) (Erwinia carotovora subsp. atroseptica).